The chain runs to 299 residues: Pectin lyase (299 aa).

Positions 1 to 18 (MKFSTFVSLGLTAITALA) are cleaved as a signal peptide. 2 stretches are compositionally biased toward low complexity: residues 82–91 (RSAATSPSSD) and 232–246 (SASA…TTRT). 2 disordered regions span residues 82 to 105 (RSAA…PSPS) and 227 to 246 (SRGR…TTRT).

Belongs to the polysaccharide lyase 1 family.

Its subcellular location is the secreted. It carries out the reaction Eliminative cleavage of (1-&gt;4)-alpha-D-galacturonan methyl ester to give oligosaccharides with 4-deoxy-6-O-methyl-alpha-D-galact-4-enuronosyl groups at their non-reducing ends.. The chain is Pectin lyase (PELA) from Peyronellaea pinodes (Pea foot rot fungus).